Reading from the N-terminus, the 573-residue chain is 60 kDa heat shock protein, mitochondrial (573 aa).

The N-terminal 26 residues, 1–26, are a transit peptide targeting the mitochondrion; sequence MLRLPAVLRQIRPVSRALAPHLTRAY. ATP contacts are provided by residues K75 and 111-115; that span reads DGTTT. The residue at position 227 (Y227) is a Phosphotyrosine. ATP-binding residues include G440 and D520.

It is found in the mitochondrion matrix. It carries out the reaction ATP + H2O + a folded polypeptide = ADP + phosphate + an unfolded polypeptide.. Functionally, chaperonin implicated in mitochondrial protein import and macromolecular assembly. Together with Hsp10, facilitates the correct folding of imported proteins. May also prevent misfolding and promote the refolding and proper assembly of unfolded polypeptides generated under stress conditions in the mitochondrial matrix. The functional units of these chaperonins consist of heptameric rings of the large subunit Hsp60, which function as a back-to-back double ring. In a cyclic reaction, Hsp60 ring complexes bind one unfolded substrate protein per ring, followed by the binding of ATP and association with 2 heptameric rings of the co-chaperonin Hsp10. This leads to sequestration of the substrate protein in the inner cavity of Hsp60 where, for a certain period of time, it can fold undisturbed by other cell components. Synchronous hydrolysis of ATP in all Hsp60 subunits results in the dissociation of the chaperonin rings and the release of ADP and the folded substrate protein. This is 60 kDa heat shock protein, mitochondrial from Gallus gallus (Chicken).